Reading from the N-terminus, the 351-residue chain is Transmembrane protein 115 (351 aa).

Topologically, residues 1–19 (MQRALPGARQHLGAILSSA) are cytoplasmic. The segment at 1–205 (MQRALPGARQ…FGLISSWVYL (205 aa)) is mediates homooligomerization. The helical transmembrane segment at 20–40 (SVVVKALCAAVLFLYLLSFAV) threads the bilayer. Residues 41 to 97 (DTGCLAVTPGYLFPPNFWIWTLATHGLMEQHVWDVAISLATVVVAGRLLEPLWGALE) lie on the Lumenal side of the membrane. The chain crosses the membrane as a helical span at residues 98-118 (LLIFFSVVNVSVGLLGAFAYL). The Cytoplasmic segment spans residues 119–126 (LTYMASFN). The chain crosses the membrane as a helical span at residues 127 to 147 (LVYLFTVRIHGALGFLGGVLV). Residues 148 to 165 (ALKQTMGDCVVLRVPQVR) lie on the Lumenal side of the membrane. The chain crosses the membrane as a helical span at residues 166–186 (VSVVPMLLLGLLLLLRLATLL). At 187–351 (QSPALASYGF…ITFEAAPPTL (165 aa)) the chain is on the cytoplasmic side. The segment at 206–229 (RFYQRHSRGRGDMADHFAFATFFP) is mediates localization to the Golgi. Residues 300 to 351 (DQSVWPSMDDDEEEAGAKVDSPMPSDKAPTLPGKGAVPESSLITFEAAPPTL) form a disordered region. The residue at position 329 (Thr329) is a Phosphothreonine.

It belongs to the TMEM115 family. Homooligomer. Interacts with COPB1. May interact with LMAN1. Interacts with the COG complex; probably through COG3.

The protein localises to the golgi apparatus. It is found in the golgi stack membrane. Its function is as follows. May play a role in retrograde transport of proteins from the Golgi to the endoplasmic reticulum. May indirectly play a role in protein glycosylation in the Golgi. The sequence is that of Transmembrane protein 115 from Bos taurus (Bovine).